The primary structure comprises 114 residues: Lymphotactin (114 aa).

An N-terminal signal peptide occupies residues 1–21 (MRLLLLTFLGVCCFAAWVVEG). C32 and C69 are disulfide-bonded. A disordered region spans residues 87-114 (RASASKSKAETIPTQAQRSASTAVTLTG). Positions 98-114 (IPTQAQRSASTAVTLTG) are enriched in polar residues.

It belongs to the intercrine gamma family.

The protein resides in the secreted. Functionally, chemotactic activity for lymphocytes but not for monocytes or neutrophils. In thymus, mediates medullary accumulation of thymic dendritic cells and contributes to regulatoy T cell development, playing a role in self-tolerance establishment. This Rattus norvegicus (Rat) protein is Lymphotactin (Xcl1).